Here is a 141-residue protein sequence, read N- to C-terminus: Subtilase cytotoxin subunit B (141 aa).

A signal peptide spans 1-23 (MTIKRFFVCAGIMGCLSLNPAMA). Residues 33–35 (MFS) and glutamine 59 contribute to the N-glycoloyl-alpha-neuraminate site. The segment at 89–94 (YFYTTG) is hydrophobic patch important for binding to SubA. Position 101 (tyrosine 101) interacts with N-glycoloyl-alpha-neuraminate.

In terms of assembly, forms a complex with SubA with the stoichiometry SubA1:SubB5 (called SubAB5). Each SubB subunit makes different contacts with the single SubA subunit. This subunit alone forms pentamers.

Its subcellular location is the secreted. The protein resides in the host cytoplasm. The protein localises to the host cytosol. It localises to the host endoplasmic reticulum lumen. Receptor-binding subunit of subtilase cytotoxin SubAB5. Required for receptor-binding and thus correct trafficking in the host cell. Has specificity for host glycans terminating in the sialic acid N-glycolyl-alpha-neuraminic acid (Neu5Gc); each subunit in the SubB pentamer binds one Neu5Gc. The protease subunit (SubA) cleaves host BiP/HSPA5, inducing the host endoplasmic reticulum stress response and eventual cell death. Culture supernatant of E.coli expressing both subA and subB are toxic for Vero cells (African green monkey kidney cell line), Chinese hamster ovary cells and Hct-8 cells (human colonic epithelial cell line); the subunits are not toxic individually. Purified SubAB5 is highly toxic, &lt;0.1 pg is able to kill at least 50% of 30'000 Vero cells in a microtiter plate assay after 3 days; no cytotoxicity is seen at 24 hours. Preabsorption with cells expressing a ganglioside GM2 mimic reduced cytotoxicity of SubAB5 by 93% in the Vero cytotoxicity assay. Intraperitoneal injection of 200 ng of purified SubAB5 kills mice; the higher the dose the faster the mice die. Animals injected with purified SubAB5 have microvascular thrombi in the brain and other organs, including the renal tubules and glomeruli. Mice fed E.coli cells expressing cloned SubAB5 experience drastic weight loss and appear ill and lethargic. SubB alone at 2.5 ug/ml causes vacuolation of Vero cells, which requires the V-type ATPase proton pump; treated cells die. Protein synthesis in Vero cells is transiently inhibited by SubAB5; both subunits are required for this effect. Inhibition of protein synthesis is prevented by brefeldin A; cells are arrested in the G1 phase. SubAB5 at 100 ng/ml induced caspase-dependent apoptosis in Vero cells through mitochondrial membrane damage. The protein is Subtilase cytotoxin subunit B of Escherichia coli.